The chain runs to 710 residues: E3 ubiquitin-protein ligase TRIM9 (710 aa).

The RING-type zinc-finger motif lies at 10–50 (CPVCGSFYREPIILPCSHNICQACARNILVQTPESESPQSR). Thr-41 is modified (phosphothreonine). Ser-44, Ser-46, Ser-49, and Ser-53 each carry phosphoserine. 2 B box-type zinc fingers span residues 163–212 (AAAL…LVPP) and 224–266 (RKVS…VKAL). The Zn(2+) site is built by Cys-168, Cys-171, Cys-193, His-198, Cys-229, His-232, Cys-252, and His-258. Residues 273–340 (HKSQLSQALN…KAQLLARVNK (68 aa)) are a coiled coil. Residues 374–432 (IKENDPSGFLQISDALIRRVHLTEDQWGKGTLTPRMTTDFDLSLDNSPLLQSIHQLDFV) form the COS domain. Residues 440 to 535 (VPATPILQLE…KTLVLQTSEV (96 aa)) form the Fibronectin type-III domain. Positions 533–702 (SEVAWFAFDP…LHTGLQVPDF (170 aa)) constitute a B30.2/SPRY domain.

The protein belongs to the TRIM/RBCC family. Interacts with SNAP25. Post-translationally, auto-ubiquitinated.

The protein resides in the cytoplasm. It localises to the cell projection. Its subcellular location is the dendrite. It is found in the cytoplasmic vesicle. The protein localises to the secretory vesicle. The protein resides in the synaptic vesicle. It localises to the synapse. Its subcellular location is the cytoskeleton. The catalysed reaction is S-ubiquitinyl-[E2 ubiquitin-conjugating enzyme]-L-cysteine + [acceptor protein]-L-lysine = [E2 ubiquitin-conjugating enzyme]-L-cysteine + N(6)-ubiquitinyl-[acceptor protein]-L-lysine.. It functions in the pathway protein modification; protein ubiquitination. In terms of biological role, E3 ubiquitin-protein ligase which ubiquitinates itself in cooperation with an E2 enzyme UBE2D2/UBC4 and serves as a targeting signal for proteasomal degradation. May play a role in regulation of neuronal functions. May act as a regulator of synaptic vesicle exocytosis by controlling the availability of SNAP25 for the SNARE complex formation. The protein is E3 ubiquitin-protein ligase TRIM9 (TRIM9) of Bos taurus (Bovine).